The following is a 451-amino-acid chain: Glutamyl-tRNA reductase (451 aa).

Substrate-binding positions include 49–52 (TCNR), S109, 114–116 (EQQ), and Q120. Residue C50 is the Nucleophile of the active site. Residue 190–195 (GAGAMG) participates in NADP(+) binding.

Belongs to the glutamyl-tRNA reductase family. In terms of assembly, homodimer.

The catalysed reaction is (S)-4-amino-5-oxopentanoate + tRNA(Glu) + NADP(+) = L-glutamyl-tRNA(Glu) + NADPH + H(+). The protein operates within porphyrin-containing compound metabolism; protoporphyrin-IX biosynthesis; 5-aminolevulinate from L-glutamyl-tRNA(Glu): step 1/2. Its function is as follows. Catalyzes the NADPH-dependent reduction of glutamyl-tRNA(Glu) to glutamate 1-semialdehyde (GSA). This is Glutamyl-tRNA reductase from Mycolicibacterium smegmatis (strain ATCC 700084 / mc(2)155) (Mycobacterium smegmatis).